Consider the following 168-residue polypeptide: Protein DESIGUAL 2 (168 aa).

The N-terminal stretch at 1–20 (MARNVGFFICILILAMDVSA) is a signal peptide. A run of 3 helical transmembrane segments spans residues 56–76 (LAAC…GGCL), 94–114 (AVAS…MLIV), and 133–153 (VLSI…AYYI).

This sequence belongs to the DESIGUAL family. In terms of tissue distribution, mainly expressed in roots, inflorescences and developing leaves, and, at low levels, in mature leaves.

Its subcellular location is the endoplasmic reticulum membrane. Functionally, involved, partially redundantly with VCC/DEAL1 and DEAL3, to ensure bilateral symmetry development and early leaf margin patterning, probably via the regulation of auxin and CUC2 distribution. In Arabidopsis thaliana (Mouse-ear cress), this protein is Protein DESIGUAL 2.